Consider the following 567-residue polypeptide: Urease subunit alpha (567 aa).

The region spanning 129–567 (GGIDTHIHWI…LPMAQRYFLF (439 aa)) is the Urease domain. Residues His-134, His-136, and Lys-217 each coordinate Ni(2+). Lys-217 carries the post-translational modification N6-carboxylysine. His-219 is a binding site for substrate. Ni(2+) is bound by residues His-246 and His-272. Catalysis depends on His-320, which acts as the Proton donor. Asp-360 serves as a coordination point for Ni(2+).

This sequence belongs to the metallo-dependent hydrolases superfamily. Urease alpha subunit family. In terms of assembly, heterotrimer of UreA (gamma), UreB (beta) and UreC (alpha) subunits. Three heterotrimers associate to form the active enzyme. Ni cation serves as cofactor. In terms of processing, carboxylation allows a single lysine to coordinate two nickel ions.

It is found in the cytoplasm. It catalyses the reaction urea + 2 H2O + H(+) = hydrogencarbonate + 2 NH4(+). It participates in nitrogen metabolism; urea degradation; CO(2) and NH(3) from urea (urease route): step 1/1. The sequence is that of Urease subunit alpha from Klebsiella pneumoniae (strain 342).